Here is an 84-residue protein sequence, read N- to C-terminus: Large ribosomal subunit protein bL27 (84 aa).

The disordered stretch occupies residues 1 to 22 (MAHKKAGGSTRNGRDSESKRLG).

This sequence belongs to the bacterial ribosomal protein bL27 family.

In Shewanella loihica (strain ATCC BAA-1088 / PV-4), this protein is Large ribosomal subunit protein bL27.